The chain runs to 85 residues: COMM domain-containing protein 6 (85 aa).

Methionine 1 bears the N-acetylmethionine mark. Positions 18–85 (QLVDFQWKLG…KEIAAVIETV (68 aa)) constitute a COMM domain.

The protein belongs to the COMM domain-containing protein 6 family. In terms of assembly, component of the commander complex consisting of the CCC subcomplex and the retriever subcomplex. Component of the CCC (COMMD/CCDC22/CCDC93) subcomplex consisting of COMMD1, COMMD2, COMMD3, COMMD4, COMMD5, COMMD6, COMMD7, COMMD8, COMMD9, COMMD10, CCDC22 and CCDC93; within the complex forms a heterodimer with COMMD1. May form a homodimer with isoform 1. Interacts with RELA, RELB, NFKB1/p105. Does not interact with NFKBIB. Interacts with CCDC22, CCDC93, SCNN1B, CUL4A. As to expression, ubiquitous. Expressed in brain, heart, skeletal muscle, lung, pancreas, liver, kidney, small intestine and placenta.

The protein resides in the nucleus. The protein localises to the cytoplasm. Its function is as follows. Scaffold protein in the commander complex that is essential for endosomal recycling of transmembrane cargos; the commander complex is composed of the CCC subcomplex and the retriever subcomplex. May modulate activity of cullin-RING E3 ubiquitin ligase (CRL) complexes. Down-regulates activation of NF-kappa-B. Inhibits TNF-induced NFKB1 activation. The polypeptide is COMM domain-containing protein 6 (COMMD6) (Homo sapiens (Human)).